A 637-amino-acid chain; its full sequence is 1-deoxy-D-xylulose-5-phosphate synthase (637 aa).

Thiamine diphosphate-binding positions include His73 and 113–115 (SHA). Asp144 is a Mg(2+) binding site. Thiamine diphosphate is bound by residues 145–146 (GA), Asn174, Tyr285, and Glu366. Asn174 is a Mg(2+) binding site.

It belongs to the transketolase family. DXPS subfamily. In terms of assembly, homodimer. Requires Mg(2+) as cofactor. It depends on thiamine diphosphate as a cofactor.

It catalyses the reaction D-glyceraldehyde 3-phosphate + pyruvate + H(+) = 1-deoxy-D-xylulose 5-phosphate + CO2. It functions in the pathway metabolic intermediate biosynthesis; 1-deoxy-D-xylulose 5-phosphate biosynthesis; 1-deoxy-D-xylulose 5-phosphate from D-glyceraldehyde 3-phosphate and pyruvate: step 1/1. Catalyzes the acyloin condensation reaction between C atoms 2 and 3 of pyruvate and glyceraldehyde 3-phosphate to yield 1-deoxy-D-xylulose-5-phosphate (DXP). The polypeptide is 1-deoxy-D-xylulose-5-phosphate synthase (Streptomyces griseus subsp. griseus (strain JCM 4626 / CBS 651.72 / NBRC 13350 / KCC S-0626 / ISP 5235)).